The primary structure comprises 309 residues: Coenzyme PQQ synthesis protein B (309 aa).

It belongs to the PqqB family.

It participates in cofactor biosynthesis; pyrroloquinoline quinone biosynthesis. Functionally, may be involved in the transport of PQQ or its precursor to the periplasm. The polypeptide is Coenzyme PQQ synthesis protein B (Nitrosococcus oceani (strain ATCC 19707 / BCRC 17464 / JCM 30415 / NCIMB 11848 / C-107)).